The chain runs to 323 residues: Beta-ketoacyl-[acyl-carrier-protein] synthase III (323 aa).

Residues Cys113 and His250 contribute to the active site. An ACP-binding region spans residues 251 to 255; sequence QANKR. Asn280 is an active-site residue.

The protein belongs to the thiolase-like superfamily. FabH family. Homodimer.

The protein resides in the cytoplasm. The catalysed reaction is malonyl-[ACP] + acetyl-CoA + H(+) = 3-oxobutanoyl-[ACP] + CO2 + CoA. It participates in lipid metabolism; fatty acid biosynthesis. Functionally, catalyzes the condensation reaction of fatty acid synthesis by the addition to an acyl acceptor of two carbons from malonyl-ACP. Catalyzes the first condensation reaction which initiates fatty acid synthesis and may therefore play a role in governing the total rate of fatty acid production. Possesses both acetoacetyl-ACP synthase and acetyl transacylase activities. Its substrate specificity determines the biosynthesis of branched-chain and/or straight-chain of fatty acids. In Agrobacterium fabrum (strain C58 / ATCC 33970) (Agrobacterium tumefaciens (strain C58)), this protein is Beta-ketoacyl-[acyl-carrier-protein] synthase III.